Here is a 222-residue protein sequence, read N- to C-terminus: Abasic site processing protein YedK (222 aa).

The active-site Nucleophile is Cys2. Cys2 bears the Thiazolidine linkage to a ring-opened DNA abasic site mark. The active site involves Glu105.

It belongs to the SOS response-associated peptidase family.

With respect to regulation, formation and reversal of DNA-protein cross-link depends on DNA context. Catalyzes formation of the thiazolidine linkage in presence of abasic sites in single-stranded DNA. Mediates the reversal of the thiazolidine cross-link in presence of double stranded DNA. Functionally, sensor of abasic sites in single-stranded DNA (ssDNA) required to preserve genome integrity by promoting error-free repair of abasic sites. Recognizes and binds abasic sites in ssDNA at replication forks and chemically modifies the lesion by forming a covalent cross-link with DNA: forms a stable thiazolidine linkage between a ring-opened abasic site and the alpha-amino and sulfhydryl substituents of its N-terminal catalytic cysteine residue. The DNA-protein cross-link is then reversed: able to catalyze the reversal of the thiazolidine cross-link and cycle between a cross-link and a non-cross-linked state depending on DNA context: mediates self-reversal of the thiazolidine cross-link in double stranded DNA. May act as a protease: mediates autocatalytic processing of its N-terminal methionine in order to expose the catalytic cysteine. This is Abasic site processing protein YedK from Escherichia coli (strain K12).